A 52-amino-acid chain; its full sequence is Small ribosomal subunit protein uS14 (52 aa).

The Zn(2+) site is built by C17, C20, C35, and C38.

The protein belongs to the universal ribosomal protein uS14 family. Zinc-binding uS14 subfamily. Part of the 30S ribosomal subunit. Zn(2+) serves as cofactor.

Binds 16S rRNA, required for the assembly of 30S particles. The protein is Small ribosomal subunit protein uS14 of Halobacterium salinarum (strain ATCC 700922 / JCM 11081 / NRC-1) (Halobacterium halobium).